We begin with the raw amino-acid sequence, 439 residues long: Putative FBD-associated F-box protein At1g05080 (439 aa).

An F-box domain is found at 12-58 (EDRISVLPEDLLVVILDLLPTKDVVATMILSKRWLSIWTMVRTLEYT). The region spanning 360 to 410 (SWKQPSHVPECLSSQLEIFEWRDYGDRIIEEEFLTYVLANSKRLKTATISL) is the FBD domain.

In Arabidopsis thaliana (Mouse-ear cress), this protein is Putative FBD-associated F-box protein At1g05080.